The following is a 776-amino-acid chain: Cullin-1 (776 aa).

Arginine 63 is subject to Omega-N-methylarginine. The Cullin neddylation domain maps to 706-766 (DRKLLIQAAI…IEKEYLERVD (61 aa)). Lysine 720 is covalently cross-linked (Glycyl lysine isopeptide (Lys-Gly) (interchain with G-Cter in NEDD8)).

The protein belongs to the cullin family. Component of multiple Cul1-RING E3 ubiquitin-protein ligase complexes commonly known as SCF (SKP1-CUL1-F-box) complexes, consisting of CUL1, SKP1, RBX1 and a variable F-box domain-containing protein as substrate-specific subunit. Component of the SCF(FBXW11) complex containing FBXW11. Component of the SCF(SKP2) complex containing SKP2, in which it interacts directly with SKP1, SKP2 and RBX1. Component of the SCF(FBXW2) complex containing FBXW2. Component of the SCF(FBXO32) complex containing FBXO32. Component of the probable SCF(FBXO7) complex containing FBXO7. Component of the SCF(FBXO10) complex containing FBXO10. Component of the SCF(FBXO11) complex containing FBXO11. Component of the SCF(FBXO25) complex containing FBXO25. Component of the SCF(FBXO33) complex containing FBXO33. Component of the probable SCF(FBXO4) complex containing FBXO4. Component of the SCF(FBXO44) complex, composed of SKP1, CUL1 and FBXO44. Component of the SCF(BTRC) complex, composed of SKP1, CUL1 and BTRC. This complex binds phosphorylated NFKBIA. Part of a SCF complex consisting of CUL1, RBX1, SKP1 and FBXO2. Component of a SCF(SKP2)-like complex containing CUL1, SKP1, TRIM21 and SKP2. Component of the SCF(FBXO17) complex, composed of SKP1, CUL1 and FBXO17. Component of the SCF(FBXO27) complex, composed of SKP1, CUL1 and FBXO27. Component of the SCF(CCNF) complex consisting of CUL1, RBX1, SKP1 and CCNF. Interacts with CCNF. Component of the SCF(FBXL3) complex composed of CUL1, SKP1, RBX1 and FBXL3. Component of the SCF(FBXL21) complex composed of CUL1, SKP1, RBX1 and FBXL21. Component of the SCF(FBXO9) composed of CUL1, SKP1, RBX1 and FBXO9. Component of the SCF(FBXW7) composed of CUL1, SKP1, RBX1 and FBXW7. Component of the SCF(FBXO31) complex composed of CUL1, SKP1, RBX1 and FBXO31. Interacts with CHEK2; mediates CHEK2 ubiquitination and regulates its function. Part of a complex with TIP120A/CAND1 and RBX1. The unneddylated form interacts with TIP120A/CAND1 and the interaction mediates the exchange of the F-box substrate-specific subunit. Can self-associate. Interacts with FBXW8. Interacts with RNF7. Interacts with TRIM21. Interacts with COPS2. Interacts with DCUN1D1 and UBE2M. Interacts with DCUN1D3. Interacts with DCUN1D4. Identified in a complex with RBX1 and GLMN. Interacts with CEP68 as part of the SCF(FBXW11) complex; the interaction is probably mediated by FBXW11 and the complex also contains CDK5RAP2 and PCNT. Interacts (when neddylated) with ARIH1; leading to activate the E3 ligase activity of ARIH1. Interacts with COPS9. Interacts with UBXN1. Interacts with KAT7, probably as part of an SCF complex; the interaction mediates KAT7 ubiquitination. Interacts with NOTCH2. Part of a complex that contains DCUN1D5, CUL1 and RBX1; this interaction is bridged by CUL1. Interacts (unneddylated form) with DCUN1D1, DCUN1D2, DCUN1D3, DCUN1D4 and DCUN1D5; these interactions promote the cullin neddylation. Interacts (via the C-terminal domain) with CUL7; the interaction seems to be mediated by FBXW8; it is likely specific to FBXW8, but not other F-box proteins. Interacts with UBR2, as part of SCF(BTRC) complex; the interaction mediates 'Lys-48'-linked ubiquitination of UBR2 and is regulated by DUSP22 in the T-cell receptor signaling pathway. As to quaternary structure, (Microbial infection) Interacts with murine cytomegalovirus M48. Post-translationally, neddylated; which enhances the ubiquitination activity of SCF. Neddylation prevents binding of the inhibitor CAND1. Neddylation leads to structural rearrangment in the complex that allows interaction between the E2 ubiquitin-conjugating enzyme and the acceptor ubiquitin. Deneddylated via its interaction with the COP9 signalosome (CSN) complex. (Microbial infection) Deneddylated by murine cytomegalovirus M48 leading to a S-phase-like environment that is required for efficient replication of the viral genome. In terms of tissue distribution, embryo fibroblasts and embryo preadipocytes.

The protein operates within protein modification; protein ubiquitination. In terms of biological role, core component of multiple cullin-RING-based SCF (SKP1-CUL1-F-box protein) E3 ubiquitin-protein ligase complexes, which mediate the ubiquitination of proteins involved in cell cycle progression, signal transduction and transcription. SCF complexes and ARIH1 collaborate in tandem to mediate ubiquitination of target proteins. In the SCF complex, serves as a rigid scaffold that organizes the SKP1-F-box protein and RBX1 subunits. May contribute to catalysis through positioning of the substrate and the ubiquitin-conjugating enzyme. The E3 ubiquitin-protein ligase activity of the complex is dependent on the neddylation of the cullin subunit and exchange of the substrate recognition component is mediated by TIP120A/CAND1. The functional specificity of the SCF complex depends on the F-box protein as substrate recognition component. SCF(BTRC) and SCF(FBXW11) direct ubiquitination of CTNNB1 and participate in Wnt signaling. SCF(FBXW11) directs ubiquitination of phosphorylated NFKBIA. SCF(BTRC) directs ubiquitination of NFKBIB, NFKBIE, ATF4, SMAD3, SMAD4, CDC25A, FBXO5 and probably NFKB2. SCF(BTRC) and/or SCF(FBXW11) direct ubiquitination of CEP68. SCF(SKP2) directs ubiquitination of phosphorylated CDKN1B/p27kip and is involved in regulation of G1/S transition. SCF(SKP2) directs ubiquitination of ORC1, CDT1, RBL2, ELF4, CDKN1A, RAG2, FOXO1A, and probably MYC and TAL1. SCF(FBXW7) directs ubiquitination of cyclin E, NOTCH1 released notch intracellular domain (NICD), and probably PSEN1. SCF(FBXW2) directs ubiquitination of GCM1. SCF(FBXO32) directs ubiquitination of MYOD1. SCF(FBXO7) directs ubiquitination of BIRC2 and DLGAP5. SCF(FBXO33) directs ubiquitination of YBX1. SCF(FBXO1) directs ubiquitination of BCL6 and DTL but does not seem to direct ubiquitination of TP53. SCF(BTRC) mediates the ubiquitination of NFKBIA at 'Lys-21' and 'Lys-22'; the degradation frees the associated NFKB1-RELA dimer to translocate into the nucleus and to activate transcription. SCF(CCNF) directs ubiquitination of CCP110. SCF(FBXL3) and SCF(FBXL21) direct ubiquitination of CRY1 and CRY2. SCF(FBXO9) directs ubiquitination of TTI1 and TELO2. SCF(FBXO10) directs ubiquitination of BCL2. Neddylated CUL1-RBX1 ubiquitinates p53/TP53 recruited by Cul7-RING(FBXW8) complex. SCF(BTRC) directs 'Lys-48'-linked ubiquitination of UBR2 in the T-cell receptor signaling pathway. The SCF(FBXO31) protein ligase complex specifically mediates the ubiquitination of proteins amidated at their C-terminus in response to oxidative stress. This chain is Cullin-1 (Cul1), found in Mus musculus (Mouse).